Reading from the N-terminus, the 296-residue chain is Undecaprenyl-diphosphatase (296 aa).

A run of 7 helical transmembrane segments spans residues 48–68, 104–124, 131–151, 167–187, 208–228, 237–257, and 272–292; these read SAFTFKIVIQLGSVFAAAWVF, LTLWHVLVGMIPAGILGLLFD, LFSVPTVMIGLLLGAFYMIFA, ITFFQAFVIGLSQAVAMWPGF, SDFTFIMAVPIMLAASLLSLV, SHIPFYIIGFLAAFIFGLLSI, and FAIYRIILVIFIAILYFGFGI.

This sequence belongs to the UppP family.

The protein localises to the cell membrane. It carries out the reaction di-trans,octa-cis-undecaprenyl diphosphate + H2O = di-trans,octa-cis-undecaprenyl phosphate + phosphate + H(+). In terms of biological role, catalyzes the dephosphorylation of undecaprenyl diphosphate (UPP). Confers resistance to bacitracin. The chain is Undecaprenyl-diphosphatase from Staphylococcus carnosus (strain TM300).